Reading from the N-terminus, the 471-residue chain is UDP-N-acetylmuramate--L-alanine ligase (471 aa).

Residue 112-118 (GTHGKTT) participates in ATP binding.

This sequence belongs to the MurCDEF family.

Its subcellular location is the cytoplasm. It carries out the reaction UDP-N-acetyl-alpha-D-muramate + L-alanine + ATP = UDP-N-acetyl-alpha-D-muramoyl-L-alanine + ADP + phosphate + H(+). Its pathway is cell wall biogenesis; peptidoglycan biosynthesis. Functionally, cell wall formation. In Cupriavidus metallidurans (strain ATCC 43123 / DSM 2839 / NBRC 102507 / CH34) (Ralstonia metallidurans), this protein is UDP-N-acetylmuramate--L-alanine ligase.